Reading from the N-terminus, the 232-residue chain is DASH complex subunit DUO1 (232 aa).

2 disordered regions span residues Met-1–Arg-44 and Glu-133–Lys-232. Residues Glu-128–Ala-171 adopt a coiled-coil conformation. Over residues Glu-133 to Arg-165 the composition is skewed to basic and acidic residues. Low complexity-rich tracts occupy residues Ala-167–Gly-183 and Gly-191–Gly-213.

This sequence belongs to the DASH complex DUO1 family. Component of the DASH complex consisting of ASK1, DAD1, DAD2, DAD3, DAD4, DAM1, DUO1, HSK3, SPC19 and SPC34, with a stoichiometry of one copy of each subunit per complex. Multiple DASH complexes oligomerize to form a ring that encircles spindle microtubules and organizes the rod-like NDC80 complexes of the outer kinetochore. DASH complex oligomerization strengthens microtubule attachments. On cytoplasmic microtubules, DASH complexes appear to form patches instead of rings.

It localises to the nucleus. Its subcellular location is the cytoplasm. It is found in the cytoskeleton. The protein resides in the spindle pole. The protein localises to the chromosome. It localises to the centromere. Its subcellular location is the kinetochore. Its function is as follows. Component of the DASH complex that connects microtubules with kinetochores and couples microtubule depolymerisation to chromosome movement; it is involved in retrieving kinetochores to the spindle poles before their re-orientation on the spindle in early mitosis and allows microtubule depolymerization to pull chromosomes apart and resist detachment during anaphase. Kinetochores, consisting of a centromere-associated inner segment and a microtubule-contacting outer segment, play a crucial role in chromosome segregation by mediating the physical connection between centromeric DNA and microtubules. Kinetochores also serve as an input point for the spindle assembly checkpoint, which delays anaphase until all chromosomes have bioriented on the mitotic spindle. The chain is DASH complex subunit DUO1 from Chaetomium thermophilum (strain DSM 1495 / CBS 144.50 / IMI 039719) (Thermochaetoides thermophila).